Reading from the N-terminus, the 349-residue chain is MNRVVVGLSGGVDSSTAAASLHHQGYDVVGLTLWLMKGKGQCCSEGMVDAAFICEQLGIPHHIVDSRDVFEKNIIDYLVSGYEVGITPLPCSQCNRAVKFGPMLNYARQELGIDRIATGHYARIGYDEVSGRYQLLRAVDRNKDQSYFLYDLTQDLLAATLFPLGNQTKEETRRIAHEFGLKTADKPESQDLCLIEAHGSMQEFLDKYIKQKEGDIVDLKGKVLGKHKGIHHYTIGQRKGLGVAAPEPLYVVKLDPIMNRVIVGNRADAGQSECNVSRMNWVSIPDPSTPIQTEAQVRYRSFPVRVNVIPLGDNRITLVFDEPQFGITPGQAAVLYQGDILLGGGIIEK.

Residues 7–14 (GLSGGVDS) and leucine 33 each bind ATP. Catalysis depends on cysteine 94, which acts as the Nucleophile. Cysteine 94 and cysteine 193 are joined by a disulfide. Residue glycine 119 participates in ATP binding. The tract at residues 143-145 (KDQ) is interaction with tRNA. Cysteine 193 acts as the Cysteine persulfide intermediate in catalysis. Residues 298-299 (RY) are interaction with tRNA.

This sequence belongs to the MnmA/TRMU family.

The protein localises to the cytoplasm. It carries out the reaction S-sulfanyl-L-cysteinyl-[protein] + uridine(34) in tRNA + AH2 + ATP = 2-thiouridine(34) in tRNA + L-cysteinyl-[protein] + A + AMP + diphosphate + H(+). In terms of biological role, catalyzes the 2-thiolation of uridine at the wobble position (U34) of tRNA, leading to the formation of s(2)U34. This chain is tRNA-specific 2-thiouridylase MnmA, found in Gloeothece citriformis (strain PCC 7424) (Cyanothece sp. (strain PCC 7424)).